A 142-amino-acid chain; its full sequence is MFQGASALTLDAKGRMSIPTRHREALQLQAEGRVTVTKHPDGCLMLFPRPEWERFRERIAALPMEAHWWKRIFLGSAADVELDTAGRVLITPELRLAATLERDVMLLGMGSHFEIWDAATYTAKEQAAMAQGMPDALKNFSF.

SpoVT-AbrB domains lie at 5 to 51 (ASAL…PRPE) and 77 to 120 (AADV…DAAT).

This sequence belongs to the MraZ family. Forms oligomers.

Its subcellular location is the cytoplasm. The protein resides in the nucleoid. This is Transcriptional regulator MraZ from Ralstonia nicotianae (strain ATCC BAA-1114 / GMI1000) (Ralstonia solanacearum).